The primary structure comprises 163 residues: Antimicrobial peptide 2 (163 aa).

A signal peptide spans 1-22; sequence MLNMKSFALLMLFATLVGVTIA. Chitin-binding type-1 domains lie at 26–66 and 69–107; these read NGKC…EIEP and AGQCYRGRCSGGLCCSKYGYCGSGPAYCGLGMCQGSCLP. 3 cysteine pairs are disulfide-bonded: Cys29–Cys42, Cys36–Cys48, and Cys41–Cys55. Positions 58-67 are excised as a propeptide; that stretch reads NTPLSEIEPT. Intrachain disulfides connect Cys72-Cys83, Cys77-Cys89, Cys82-Cys96, and Cys101-Cys105. A propeptide spanning residues 100–163 is cleaved from the precursor; that stretch reads MCQGSCLPDM…QVEPAVTKAP (64 aa).

In terms of tissue distribution, expressed in roots, flowers, stem and leaves.

In terms of biological role, antimicrobial peptide. In Stellaria media (Common chickweed), this protein is Antimicrobial peptide 2.